Consider the following 77-residue polypeptide: Small ribosomal subunit protein uS17 (77 aa).

This sequence belongs to the universal ribosomal protein uS17 family. As to quaternary structure, part of the 30S ribosomal subunit.

One of the primary rRNA binding proteins, it binds specifically to the 5'-end of 16S ribosomal RNA. The polypeptide is Small ribosomal subunit protein uS17 (Rickettsia akari (strain Hartford)).